Here is a 179-residue protein sequence, read N- to C-terminus: NADH-quinone oxidoreductase subunit B (179 aa).

[4Fe-4S] cluster contacts are provided by C35, C36, C100, and C129.

The protein belongs to the complex I 20 kDa subunit family. NDH-1 is composed of 14 different subunits. Subunits NuoB, C, D, E, F, and G constitute the peripheral sector of the complex. Requires [4Fe-4S] cluster as cofactor.

Its subcellular location is the cell inner membrane. It catalyses the reaction a quinone + NADH + 5 H(+)(in) = a quinol + NAD(+) + 4 H(+)(out). Its function is as follows. NDH-1 shuttles electrons from NADH, via FMN and iron-sulfur (Fe-S) centers, to quinones in the respiratory chain. Couples the redox reaction to proton translocation (for every two electrons transferred, four hydrogen ions are translocated across the cytoplasmic membrane), and thus conserves the redox energy in a proton gradient. This Aquifex aeolicus (strain VF5) protein is NADH-quinone oxidoreductase subunit B.